The sequence spans 613 residues: Pescadillo homolog (613 aa).

A coiled-coil region spans residues 259 to 344; the sequence is KELSNELETK…MKQIEHDIIX (86 aa). The interval 268–333 is disordered; sequence KESTEDNIIE…KNDQKNDQKN (66 aa). A compositionally biased stretch (basic and acidic residues) spans 278–333; it reads ENEKKTKNGKTENCEKNDQENEKKTKNDKTKNCEKNDQKNDQKNDQKNDQKNDQKN. The region spanning 350–453 is the BRCT domain; sequence SVKNLFKNHI…MILSCEDYNI (104 aa). Residues 485–517 are disordered; it reads LSEDPQYNKSIQKNKTNSENKXNNYNDNENDMS. Residues 492-601 adopt a coiled-coil conformation; the sequence is NKSIQKNKTN…ENRQKLTIEK (110 aa). Positions 497–511 are enriched in low complexity; it reads KNKTNSENKXNNYND.

It belongs to the pescadillo family.

The protein localises to the nucleus. Its subcellular location is the nucleolus. It is found in the nucleoplasm. Its function is as follows. Required for maturation of ribosomal RNAs and formation of the large ribosomal subunit. This is Pescadillo homolog from Plasmodium yoelii yoelii.